The sequence spans 328 residues: Phosphate acyltransferase (328 aa).

Belongs to the PlsX family. As to quaternary structure, homodimer. Probably interacts with PlsY.

The protein localises to the cytoplasm. It carries out the reaction a fatty acyl-[ACP] + phosphate = an acyl phosphate + holo-[ACP]. The protein operates within lipid metabolism; phospholipid metabolism. Functionally, catalyzes the reversible formation of acyl-phosphate (acyl-PO(4)) from acyl-[acyl-carrier-protein] (acyl-ACP). This enzyme utilizes acyl-ACP as fatty acyl donor, but not acyl-CoA. The polypeptide is Phosphate acyltransferase (Staphylococcus aureus (strain Mu3 / ATCC 700698)).